Here is a 355-residue protein sequence, read N- to C-terminus: Peptide chain release factor 1 (355 aa).

The residue at position 231 (Gln231) is an N5-methylglutamine.

It belongs to the prokaryotic/mitochondrial release factor family. In terms of processing, methylated by PrmC. Methylation increases the termination efficiency of RF1.

It localises to the cytoplasm. Its function is as follows. Peptide chain release factor 1 directs the termination of translation in response to the peptide chain termination codons UAG and UAA. The polypeptide is Peptide chain release factor 1 (Wolinella succinogenes (strain ATCC 29543 / DSM 1740 / CCUG 13145 / JCM 31913 / LMG 7466 / NCTC 11488 / FDC 602W) (Vibrio succinogenes)).